The sequence spans 374 residues: N-acetyldiaminopimelate deacetylase (374 aa).

Asp69 is an active-site residue. The active-site Proton acceptor is Glu128.

It belongs to the peptidase M20A family. N-acetyldiaminopimelate deacetylase subfamily.

The enzyme catalyses N-acetyl-(2S,6S)-2,6-diaminopimelate + H2O = (2S,6S)-2,6-diaminopimelate + acetate. It functions in the pathway amino-acid biosynthesis; L-lysine biosynthesis via DAP pathway; LL-2,6-diaminopimelate from (S)-tetrahydrodipicolinate (acetylase route): step 3/3. In terms of biological role, catalyzes the conversion of N-acetyl-diaminopimelate to diaminopimelate and acetate. This is N-acetyldiaminopimelate deacetylase from Bacillus velezensis (strain DSM 23117 / BGSC 10A6 / LMG 26770 / FZB42) (Bacillus amyloliquefaciens subsp. plantarum).